We begin with the raw amino-acid sequence, 111 residues long: BET1-like protein (111 aa).

At 1–86 (MADWARAQSP…MARSGQDNRK (86 aa)) the chain is on the cytoplasmic side. 2 positions are modified to phosphoserine: Ser-9 and Ser-37. Residues 15–77 (EILDRENKRM…TGSVKRFSTM (63 aa)) form the t-SNARE coiled-coil homology domain. The helical; Anchor for type IV membrane protein transmembrane segment at 87 to 107 (LLCGMAVGLIVAFFILSYFLS) threads the bilayer. At 108–111 (RART) the chain is on the lumenal side.

In terms of assembly, component of a SNARE complex consisting of STX5, YKT6, GOSR1 and BET1L. Interacts with STX5.

The protein localises to the golgi apparatus membrane. The protein resides in the golgi apparatus. It is found in the trans-Golgi network membrane. In terms of biological role, vesicle SNARE required for targeting and fusion of retrograde transport vesicles with the Golgi complex. Required for the integrity of the Golgi complex. This Homo sapiens (Human) protein is BET1-like protein.